A 216-amino-acid chain; its full sequence is MAATNTILAFSSPSRLLIPPSSNPSTLRSSFRGVSLNNNNLHRLQSVSFAVKAPSKALTVVSAAKKAVAVLKGTSDVEGVVTLTQDDSGPTTVNVRITGLTPGPHGFHLHEFGDTTNGCISTGPHFNPNNMTHGAPEDECRHAGDLGNINANADGVAETTIVDNQIPLTGPNSVVGRAFVVHELKDDLGKGGHELSLTTGNAGGRLACGVIGLTPL.

Residues 1–62 (MAATNTILAF…APSKALTVVS (62 aa)) constitute a chloroplast transit peptide. Residues His-108, His-110, and His-125 each contribute to the Cu cation site. Cys-119 and Cys-208 are joined by a disulfide. The Zn(2+) site is built by His-125, His-133, His-142, and Asp-145. Position 182 (His-182) interacts with Cu cation.

This sequence belongs to the Cu-Zn superoxide dismutase family. As to quaternary structure, homotetramer. Requires Cu cation as cofactor. The cofactor is Zn(2+). As to expression, expressed in leaves (at protein level). The spatial localization is regulated by miR398-mediated silencing. Mostly present in flowers, old rosette leaves and inflorescence, and, to a lower extent, in cauline leaves, stems and roots.

It is found in the plastid. The protein resides in the chloroplast. It catalyses the reaction 2 superoxide + 2 H(+) = H2O2 + O2. Destroys radicals which are normally produced within the cells and which are toxic to biological systems. Mediates tolerance to stress, including photo-oxidative stress. This is Superoxide dismutase [Cu-Zn] 2, chloroplastic (CSD2) from Arabidopsis thaliana (Mouse-ear cress).